Here is a 29-residue protein sequence, read N- to C-terminus: U20-ctenitoxin-Co1a (29 aa).

Intrachain disulfides connect cysteine 3/cysteine 16 and cysteine 10/cysteine 21.

As to expression, expressed by the venom gland.

The protein localises to the secreted. The chain is U20-ctenitoxin-Co1a from Ctenus ornatus (Brazilian spider).